We begin with the raw amino-acid sequence, 245 residues long: Phosducin (245 aa).

Residues methionine 1 to arginine 70 are disordered. The region spanning methionine 1–methionine 244 is the Phosducin domain. 2 stretches are compositionally biased toward basic and acidic residues: residues aspartate 28–leucine 50 and serine 58–serine 69. Phosphoserine; by PKA is present on serine 73. Positions tyrosine 111 to glutamate 245 are thioredoxin fold.

The protein belongs to the phosducin family. Interacts with CRX. Forms a complex with the beta and gamma subunits of the GTP-binding protein, transducin. In terms of processing, light-induced changes in cyclic nucleotide levels modulate the phosphorylation of this protein by cAMP kinase.

Its subcellular location is the cytoplasm. The protein resides in the cytosol. It localises to the nucleus. It is found in the cell projection. The protein localises to the cilium. Its subcellular location is the photoreceptor outer segment. The protein resides in the photoreceptor inner segment. In terms of biological role, inhibits the transcriptional activation activity of the cone-rod homeobox CRX. May participate in the regulation of visual phototransduction or in the integration of photoreceptor metabolism. The protein is Phosducin (PDC) of Bos taurus (Bovine).